Reading from the N-terminus, the 434-residue chain is MTRILKLSHLTPQQLNQLKRRSEQNIDQALAIAKEVIEQVKMEGDAGVLHYSRQFDFAGATAENLRVSEAEFAEAEKLVDPELRRAVEHAFRNIEKVHAGQMPPPMHLAEIEPGVFAGEKITPLPTVGLYVPRGKGAFPSMMLMLAVPARVAGVKKIVVCTPPDKEGKVEPVSLVTARMAGVDEVYKLGGVQALAAIAYGTKTVSKVDKLIGPCSIYGAAAKRLLSGIVDVGLPAGPSESIVLADETTDPKLAALDLLIEAEHGSDSAALLVTHSASLAEKALGYLGEYLEKLPPWRKKFCEDGLGSYGGILLTDSLQASLDFINDYAPEHLQVLTADPLKLVGKIDNAGEILLGNYTPSSAATYAIGVNAVLPTGGFARSYSAVSVFDFLKRSTLAYLTEEGFAGVKETVTTLADYEDFPAHALAIRERENLL.

Residues glutamate 260 and histidine 263 each contribute to the Zn(2+) site. Residues glutamate 330 and histidine 331 each act as proton acceptor in the active site. Histidine 423 serves as a coordination point for Zn(2+).

This sequence belongs to the histidinol dehydrogenase family. It depends on Zn(2+) as a cofactor.

The catalysed reaction is L-histidinol + 2 NAD(+) + H2O = L-histidine + 2 NADH + 3 H(+). The protein operates within amino-acid biosynthesis; L-histidine biosynthesis; L-histidine from 5-phospho-alpha-D-ribose 1-diphosphate: step 9/9. Its function is as follows. Catalyzes the sequential NAD-dependent oxidations of L-histidinol to L-histidinaldehyde and then to L-histidine. This chain is Histidinol dehydrogenase (hisD), found in Synechocystis sp. (strain ATCC 27184 / PCC 6803 / Kazusa).